The primary structure comprises 151 residues: Small ribosomal subunit protein uS15 (151 aa).

Over residues 1–11 (MPHRSRHKKGR) the composition is skewed to basic residues. The interval 1 to 24 (MPHRSRHKKGRSSSVRPPHPTVPT) is disordered.

This sequence belongs to the universal ribosomal protein uS15 family. In terms of assembly, part of the 30S ribosomal subunit.

This is Small ribosomal subunit protein uS15 from Pyrobaculum calidifontis (strain DSM 21063 / JCM 11548 / VA1).